A 306-amino-acid chain; its full sequence is MASKILFIGGTGYIGKFIVEASAKAGHPTFVLVRESTLSNPAKSVVIYNFKNLGVNFLIGDLFDHESLVKAIKQVDVVISTVGHAQLVEQDRIIAAIKEAGNVKRFFPSEFGNDVDRVNAVEPAKSAFATKANVRRAIEAEGIPYTYVSSNFFSGYFLLSFNQPGATAPPRDKVVILGDGNPKAVFNKEDDIATYTIKAVDDPRTLNKILYIKPPANTISFNDLVSLWEKKIGKTLERIYVPEEQLLKNIQEASVPVNVVLSIGHSVFVKGDHTNFEIEPSFGVEASELYPDVKYTTVDEYLKQFV.

NADP(+) is bound by residues glycine 9 to glycine 15, arginine 34, and lysine 43. The Proton acceptor role is filled by lysine 131. An NADP(+)-binding site is contributed by arginine 135.

It belongs to the NmrA-type oxidoreductase family. Isoflavone reductase subfamily.

The catalysed reaction is (-)-dehydrodiconiferyl alcohol + NADPH + H(+) = (S)-isodihydrodehydrodiconiferyl alcohol + NADP(+). It catalyses the reaction (+)-dehydrodiconiferyl alcohol + NADPH + H(+) = (R)-isodihydrodehydrodiconiferyl alcohol + NADP(+). The enzyme catalyses (2R,3S)-dihydrodehydrodiconiferyl alcohol + NADPH + H(+) = (S)-tetrahydrodehydrodiconiferyl alcohol + NADP(+). It carries out the reaction (2S,3R)-dihydrodehydrodiconiferyl alcohol + NADPH + H(+) = (R)-tetrahydrodehydrodiconiferyl alcohol + NADP(+). Functionally, oxidoreductase involved in lignan biosynthesis. Catalyzes the NADPH-dependent reduction of phenylcoumaran benzylic ethers. Converts dehydrodiconiferyl alcohol (DDC) to isodihydrodehydrodiconiferyl alcohol (IDDDC), and dihydrodehydrodiconiferyl alcohol (DDDC) to tetrahydrodehydrodiconiferyl alcohol (TDDC). This chain is Phenylcoumaran benzylic ether reductase POP1, found in Populus trichocarpa (Western balsam poplar).